We begin with the raw amino-acid sequence, 158 residues long: Phosphopantetheine adenylyltransferase (158 aa).

S10 is a substrate binding site. Residues 10–11 and H18 contribute to the ATP site; that span reads SF. Substrate contacts are provided by K42, L74, and R88. Residues 89–91, E99, and 124–130 contribute to the ATP site; these read GLR and YANISSS.

The protein belongs to the bacterial CoaD family. As to quaternary structure, homohexamer. Mg(2+) is required as a cofactor.

Its subcellular location is the cytoplasm. It carries out the reaction (R)-4'-phosphopantetheine + ATP + H(+) = 3'-dephospho-CoA + diphosphate. It participates in cofactor biosynthesis; coenzyme A biosynthesis; CoA from (R)-pantothenate: step 4/5. Reversibly transfers an adenylyl group from ATP to 4'-phosphopantetheine, yielding dephospho-CoA (dPCoA) and pyrophosphate. This Vesicomyosocius okutanii subsp. Calyptogena okutanii (strain HA) protein is Phosphopantetheine adenylyltransferase.